Here is a 417-residue protein sequence, read N- to C-terminus: NADH-quinone oxidoreductase subunit D (417 aa).

This sequence belongs to the complex I 49 kDa subunit family. As to quaternary structure, NDH-1 is composed of 14 different subunits. Subunits NuoB, C, D, E, F, and G constitute the peripheral sector of the complex.

It localises to the cell inner membrane. It carries out the reaction a quinone + NADH + 5 H(+)(in) = a quinol + NAD(+) + 4 H(+)(out). Its function is as follows. NDH-1 shuttles electrons from NADH, via FMN and iron-sulfur (Fe-S) centers, to quinones in the respiratory chain. The immediate electron acceptor for the enzyme in this species is believed to be ubiquinone. Couples the redox reaction to proton translocation (for every two electrons transferred, four hydrogen ions are translocated across the cytoplasmic membrane), and thus conserves the redox energy in a proton gradient. The sequence is that of NADH-quinone oxidoreductase subunit D from Janthinobacterium sp. (strain Marseille) (Minibacterium massiliensis).